A 383-amino-acid polypeptide reads, in one-letter code: Adaptive-response sensory kinase SasA (383 aa).

Residues 152–365 enclose the Histidine kinase domain; it reads MVAHELRTPL…CFTFTVPIWQ (214 aa). Position 155 is a phosphohistidine; by autocatalysis (histidine 155).

Homooligomerizes. Interacts with KaiC. Participates in the KaiABC clock complex, whose core is composed of a KaiC homohexamer, 6 KaiB and up to 6 KaiA dimers. SasA and KaiB(fs) compete to bind to KaiC.

It carries out the reaction ATP + protein L-histidine = ADP + protein N-phospho-L-histidine.. In terms of biological role, member of the two-component regulatory system SasA/RpaA involved in genome-wide circadian gene expression. One of several clock output pathways. Participates in the Kai clock protein complex, the main circadian regulator in cyanobacteria, via its interaction with KaiC. KaiC enhances the autophosphorylation activity of SasA, which then transfers its phosphate group to RpaA to activate it. In addition to its output function, recruits fold-shifted KaiB (KaiB(fs)) to KaiC to cooperatively form the KaiB(6):KaiC(6) complex (independent of SasA kinase activity). Required for robustness of the circadian rhythm of gene expression and is involved in clock output, also required for adaptation to light/dark cycles. This Synechococcus sp. (strain CC9902) protein is Adaptive-response sensory kinase SasA.